Consider the following 196-residue polypeptide: MRMEVVLVVFLMFIGTINCERLIFNGRPLLHRVTKEETVMLYHELEVAASADEVWSVEGSPELGLHLPDLLPAGIFAKFEITGDGGEGSILDMTFPPGQFPHHYREKFVFFDHKNRYKLVEQIDGDFFDLGVTYYMDTIRVVATGPDSCVIKSTTEYHVKPEFAKIVKPLIDTVPLAIMSEAIAKVVLENKHKSSE.

Positions 1 to 19 are cleaved as a signal peptide; that stretch reads MRMEVVLVVFLMFIGTINC. 104-106 contributes to the dopamine binding site; it reads YRE. Catalysis depends on Lys-118, which acts as the Proton donor. Residue Asp-137 coordinates (4-hydroxyphenyl)acetaldehyde.

The protein belongs to the BetVI family.

The catalysed reaction is (4-hydroxyphenyl)acetaldehyde + dopamine = (S)-norcoclaurine + H2O. With respect to regulation, not inhibited by O-phenanthroline or EDTA. Its function is as follows. Involved in the biosynthesis of the common precursor of all benzylisoquinoline alkaloids such as morphine, sanguinarine, codeine or berberine. Condenses dopamine and pyruvic acid or 4-hydroxyphenylpyruvate. The polypeptide is S-norcoclaurine synthase 2 (PR10A) (Coptis japonica (Japanese goldthread)).